The following is a 3707-amino-acid chain: CUB and sushi domain-containing protein 3 (3707 aa).

A disordered region spans residues 1–21; the sequence is MKGIRKGESRAKESKPWEPGK. The Cytoplasmic portion of the chain corresponds to 1–42; it reads MKGIRKGESRAKESKPWEPGKRRCAKCGRLDFILMKKMGIKS. A helical transmembrane segment spans residues 43–63; it reads GFTFWNLVFLLTVSCVKGFIY. Residues 64–3630 are Extracellular-facing; the sequence is TCGGTLKGLN…NQPHGTNSSS (3567 aa). 4 disulfide bridges follow: Cys65/Cys91, Cys178/Cys218, Cys204/Cys235, and Cys241/Cys267. A CUB 1 domain is found at 65–173; it reads CGGTLKGLNG…HGFKVYYEEL (109 aa). N-linked (GlcNAc...) asparagine glycans are attached at residues Asn73 and Asn90. Residues 176–237 form the Sushi 1 domain; sequence SSCGNPGVPP…WDFPVPICRA (62 aa). Positions 241–345 constitute a CUB 2 domain; the sequence is CGGTMRGSSG…RGFSAPYQGS (105 aa). Asn361 and Asn409 each carry an N-linked (GlcNAc...) asparagine glycan. The tract at residues 394 to 435 is disordered; that stretch reads QRVQVTSLRNSGLDPNTSKDGLSPHPADTQSTRRRPRHAEQI. Residues 396-413 are compositionally biased toward polar residues; it reads VQVTSLRNSGLDPNTSKD. Positions 484–545 constitute a Sushi 2 domain; the sequence is NLCPDPGEPE…WSDHRPVCKV (62 aa). 6 cysteine pairs are disulfide-bonded: Cys486/Cys526, Cys512/Cys543, Cys548/Cys574, Cys664/Cys704, Cys690/Cys717, and Cys721/Cys747. The CUB 3 domain occupies 548–659; it reads CGSNLQGPSG…VGFKVNYKEI (112 aa). In terms of domain architecture, Sushi 3 spans 662-719; it reads ESCGDPGTPLYGIREGDGFSNRDVLRFECQFGFELIGEKSIVCQENNQWSANIPICIF. Residues 721 to 829 enclose the CUB 4 domain; that stretch reads CLSNFTAPMG…RGFNITYNTF (109 aa). Residues Asn724 and Asn823 are each glycosylated (N-linked (GlcNAc...) asparagine). The 62-residue stretch at 832-893 folds into the Sushi 4 domain; sequence NECPDPGIPI…WSGLIPKCGA (62 aa). Intrachain disulfides connect Cys834/Cys875, Cys860/Cys891, and Cys895/Cys921. The CUB 5 domain maps to 895-1003; that stretch reads CGGHFSAPSG…NGFKIHYESV (109 aa). Asn966 carries N-linked (GlcNAc...) asparagine glycosylation. Residues 1008–1065 form the Sushi 5 domain; the sequence is YSCLDPGIPVHGRRYGHDFSIGSTVSFSCDSGYRLSHEEPLLCEKNHWWSHPLPTCDA. 3 disulfide bridges follow: Cys1010/Cys1050, Cys1036/Cys1063, and Cys1067/Cys1093. The CUB 6 domain maps to 1067–1177; sequence CGGDVRGPSG…EGFNITFSEY (111 aa). Asn1092, Asn1126, and Asn1171 each carry an N-linked (GlcNAc...) asparagine glycan. One can recognise a Sushi 6 domain in the interval 1180 to 1239; it reads EPCEDPGIPQYGSRIGFNFGIGDTLTFSCSSGYRLEGTSEIICLGGGRRVWSAPLPRCVA. 3 cysteine pairs are disulfide-bonded: Cys1182–Cys1222, Cys1208–Cys1237, and Cys1241–Cys1267. Residues 1241-1349 form the CUB 7 domain; it reads CGASATNNEG…EGFQLVYTSF (109 aa). The N-linked (GlcNAc...) asparagine glycan is linked to Asn1280. The 61-residue stretch at 1352 to 1412 folds into the Sushi 7 domain; the sequence is SHCEDPGIPQ…WDYPLPSCIA (61 aa). Intrachain disulfides connect Cys1354-Cys1395, Cys1381-Cys1410, Cys1414-Cys1441, Cys1528-Cys1568, Cys1554-Cys1584, Cys1588-Cys1614, Cys1701-Cys1741, Cys1727-Cys1758, Cys1762-Cys1788, Cys1878-Cys1918, Cys1904-Cys1935, and Cys1939-Cys1965. The region spanning 1414-1523 is the CUB 8 domain; the sequence is CGGRFKGESS…SGFAIQFSSS (110 aa). The 61-residue stretch at 1526-1586 folds into the Sushi 8 domain; sequence TACRDPGVPM…WQPSPPVCIA (61 aa). Asn1536 carries an N-linked (GlcNAc...) asparagine glycan. The 109-residue stretch at 1588-1696 folds into the CUB 9 domain; that stretch reads CGGNLTGSSG…TGFHLEYKAK (109 aa). N-linked (GlcNAc...) asparagine glycosylation is found at Asn1591 and Asn1709. The Sushi 9 domain occupies 1699 to 1760; it reads ESCFDPGNIM…WNRALPSCHA (62 aa). The 109-residue stretch at 1762 to 1870 folds into the CUB 10 domain; it reads CGSRSTGSEG…KGFHFVYQAV (109 aa). Asn1781 is a glycosylation site (N-linked (GlcNAc...) asparagine). Positions 1876-1937 constitute a Sushi 10 domain; that stretch reads TQCSSVPEPR…WNDSLPTCIV (62 aa). Residue Asn1929 is glycosylated (N-linked (GlcNAc...) asparagine). The CUB 11 domain occupies 1939–2047; that stretch reads CGGILTKRKG…AGFHLEYTAI (109 aa). Residue Asn2019 is glycosylated (N-linked (GlcNAc...) asparagine). Positions 2050–2109 constitute a Sushi 11 domain; the sequence is DSCPEPQTPSSGIKIGDRYMVGDVVSFQCDQGYSLQGHSHITCMPGPVRRWNYPIPICLA. Intrachain disulfides connect Cys2052–Cys2092, Cys2078–Cys2107, and Cys2111–Cys2137. Residues 2111 to 2219 form the CUB 12 domain; that stretch reads CGGAMSDFSG…QGFHIVYQAY (109 aa). Asn2155 carries N-linked (GlcNAc...) asparagine glycosylation. Residues 2222 to 2281 enclose the Sushi 12 domain; it reads QSCPDPRPFRNGFVIGNDFTVGQTISFECFPGYTLIGNSALTCLHGVSRNWNHPLPRCEA. 3 disulfide bridges follow: Cys2224/Cys2264, Cys2250/Cys2279, and Cys2283/Cys2309. The 112-residue stretch at 2283 to 2394 folds into the CUB 13 domain; that stretch reads CGGNITAMNG…LSYHAYQLRV (112 aa). N-linked (GlcNAc...) asparagine glycosylation is found at Asn2286, Asn2291, and Asn2324. Residues 2393-2454 enclose the Sushi 13 domain; that stretch reads RVCQPPPPVP…MDGAPPVCQV (62 aa). Intrachain disulfides connect Cys2395-Cys2437, Cys2423-Cys2452, and Cys2456-Cys2484. The 112-residue stretch at 2456–2567 folds into the CUB 14 domain; that stretch reads CPANELRLDS…KGFRIRYIAF (112 aa). 2 N-linked (GlcNAc...) asparagine glycosylation sites follow: Asn2495 and Asn2537. 15 consecutive Sushi domains span residues 2567–2629, 2630–2691, 2692–2756, 2757–2814, 2815–2872, 2873–2930, 2931–2992, 2993–3050, 3054–3111, 3112–3170, 3171–3230, 3231–3288, 3289–3346, 3350–3408, and 3409–3468; these read FYCS…ACQA, ISCG…RCVV, VTCP…YCQI, ISCG…RCLA, GHCG…SCVP, VSCG…MCKV, VNCS…ECIM, IDCG…HCSG, GTCG…ECKA, VQCG…NCTI, ISCG…TCRA, VTCP…QCLP, KFCG…HCIE, TSCE…ECIP, and HSCK…ICEA. 12 disulfides stabilise this stretch: Cys2569/Cys2610, Cys2596/Cys2627, Cys2632/Cys2674, Cys2658/Cys2689, Cys2694/Cys2739, Cys2725/Cys2754, Cys2759/Cys2799, Cys2785/Cys2812, Cys2817/Cys2857, Cys2843/Cys2870, Cys2875/Cys2915, and Cys2901/Cys2928. Residues Asn2711 and Asn2742 are each glycosylated (N-linked (GlcNAc...) asparagine). Asn2862 carries N-linked (GlcNAc...) asparagine glycosylation. N-linked (GlcNAc...) asparagine glycans are attached at residues Asn2932 and Asn2952. Intrachain disulfides connect Cys2933/Cys2977, Cys2963/Cys2990, Cys2995/Cys3035, Cys3021/Cys3048, Cys3056/Cys3096, Cys3082/Cys3109, Cys3114/Cys3155, Cys3141/Cys3168, Cys3173/Cys3215, Cys3199/Cys3228, Cys3233/Cys3273, Cys3259/Cys3286, Cys3291/Cys3331, Cys3317/Cys3344, Cys3352/Cys3393, Cys3379/Cys3406, Cys3411/Cys3453, and Cys3438/Cys3466. A glycan (N-linked (GlcNAc...) asparagine) is linked at Asn3099. N-linked (GlcNAc...) asparagine glycans are attached at residues Asn3158, Asn3167, Asn3194, Asn3208, and Asn3218. Asn3276 carries N-linked (GlcNAc...) asparagine glycosylation. N-linked (GlcNAc...) asparagine glycosylation is present at Asn3364. Residues Asn3522, Asn3529, Asn3612, Asn3618, and Asn3627 are each glycosylated (N-linked (GlcNAc...) asparagine). The chain crosses the membrane as a helical span at residues 3631-3651; the sequence is VAIAILVPFFALIFAGFGFYL. Residues 3652 to 3707 lie on the Cytoplasmic side of the membrane; it reads YKQRTAPKTQYTGCSVHENNNGQAAFENPMYDTNAKSVEGKAVRFDPNLNTVCTMV.

This sequence belongs to the CSMD family. In terms of tissue distribution, weakly expressed in most tissues, except in brain. Expressed at intermediate level in brain, including cerebellum, substantia nigra, thalamus, spinal cord, hippocampus and fetal brain. Also expressed in testis.

The protein localises to the cell membrane. Involved in dendrite development. This chain is CUB and sushi domain-containing protein 3 (CSMD3), found in Homo sapiens (Human).